A 585-amino-acid polypeptide reads, in one-letter code: Proline--tRNA ligase (585 aa).

The protein belongs to the class-II aminoacyl-tRNA synthetase family. ProS type 1 subfamily. In terms of assembly, homodimer.

It localises to the cytoplasm. It catalyses the reaction tRNA(Pro) + L-proline + ATP = L-prolyl-tRNA(Pro) + AMP + diphosphate. Its function is as follows. Catalyzes the attachment of proline to tRNA(Pro) in a two-step reaction: proline is first activated by ATP to form Pro-AMP and then transferred to the acceptor end of tRNA(Pro). As ProRS can inadvertently accommodate and process non-cognate amino acids such as alanine and cysteine, to avoid such errors it has two additional distinct editing activities against alanine. One activity is designated as 'pretransfer' editing and involves the tRNA(Pro)-independent hydrolysis of activated Ala-AMP. The other activity is designated 'posttransfer' editing and involves deacylation of mischarged Ala-tRNA(Pro). The misacylated Cys-tRNA(Pro) is not edited by ProRS. This chain is Proline--tRNA ligase, found in Nocardia farcinica (strain IFM 10152).